Reading from the N-terminus, the 92-residue chain is UPF0213 protein MGAS9429_Spy1198 (92 aa).

The 77-residue stretch at 4-80 (KKAYMYVLEC…KRKTRSQKLA (77 aa)) folds into the GIY-YIG domain.

It belongs to the UPF0213 family.

This Streptococcus pyogenes serotype M12 (strain MGAS9429) protein is UPF0213 protein MGAS9429_Spy1198.